The sequence spans 73 residues: Putative antitoxin VapB21 (73 aa).

It belongs to the UPF0330 family.

Its function is as follows. Possibly the antitoxin component of a type II toxin-antitoxin (TA) system. Its cognate toxin is VapC21 (Potential). This Sulfurisphaera tokodaii (strain DSM 16993 / JCM 10545 / NBRC 100140 / 7) (Sulfolobus tokodaii) protein is Putative antitoxin VapB21 (vapB21).